The chain runs to 133 residues: p53 and DNA damage-regulated protein 1 (133 aa).

Belongs to the prefoldin subunit beta family. In terms of assembly, component of the PAQosome complex which is responsible for the biogenesis of several protein complexes and which consists of R2TP complex members RUVBL1, RUVBL2, RPAP3 and PIH1D1, URI complex members PFDN2, PFDN6, PDRG1, UXT and URI1 as well as ASDURF, POLR2E and DNAAF10/WDR92.

It localises to the cytoplasm. May play a role in chaperone-mediated protein folding. In Pongo abelii (Sumatran orangutan), this protein is p53 and DNA damage-regulated protein 1 (PDRG1).